A 311-amino-acid chain; its full sequence is tRNA-cytidine(32) 2-sulfurtransferase (311 aa).

The PP-loop motif motif lies at 47–52 (SGGKDS). [4Fe-4S] cluster is bound by residues Cys-122, Cys-125, and Cys-213.

It belongs to the TtcA family. In terms of assembly, homodimer. It depends on Mg(2+) as a cofactor. [4Fe-4S] cluster is required as a cofactor.

It is found in the cytoplasm. The catalysed reaction is cytidine(32) in tRNA + S-sulfanyl-L-cysteinyl-[cysteine desulfurase] + AH2 + ATP = 2-thiocytidine(32) in tRNA + L-cysteinyl-[cysteine desulfurase] + A + AMP + diphosphate + H(+). It participates in tRNA modification. Its function is as follows. Catalyzes the ATP-dependent 2-thiolation of cytidine in position 32 of tRNA, to form 2-thiocytidine (s(2)C32). The sulfur atoms are provided by the cysteine/cysteine desulfurase (IscS) system. This is tRNA-cytidine(32) 2-sulfurtransferase from Salmonella paratyphi A (strain ATCC 9150 / SARB42).